The following is a 215-amino-acid chain: Chaperone protein TorD (215 aa).

It belongs to the TorD/DmsD family. TorD subfamily.

It is found in the cytoplasm. Its function is as follows. Involved in the biogenesis of TorA. Acts on TorA before the insertion of the molybdenum cofactor and, as a result, probably favors a conformation of the apoenzyme that is competent for acquiring the cofactor. In Aliivibrio fischeri (strain ATCC 700601 / ES114) (Vibrio fischeri), this protein is Chaperone protein TorD.